Consider the following 767-residue polypeptide: Cullin-1 (767 aa).

The region spanning 699–760 (DRKLLLQSAI…EKEYLERQGR (62 aa)) is the Cullin neddylation domain. A Glycyl lysine isopeptide (Lys-Gly) (interchain with G-Cter in NEDD8) cross-link involves residue lysine 713.

The protein belongs to the cullin family. In terms of assembly, component of multiple Cul1-RING E3 ubiquitin-protein ligase complexes commonly known as SCF (SKP1-CUL1-F-box) complexes, consisting of cul1, skp1, pip1 and a variable F-box domain-containing protein as substrate-specific subunit. Binds to the pop1 homodimer, the pop2 homodimer and the pop1/pop2 heterodimer forming the SCF(pop1-pop2) complex. Interacts with pof3, pof14 and skp1. Post-translationally, neddylated; enhancing the ubiquitin-ligase activity.

It is found in the cytoplasm. The protein operates within protein modification; protein ubiquitination. In terms of biological role, core component of multiple cullin-RING-based SCF (SKP1-CUL1-F-box protein) E3 ubiquitin-protein ligase complexes, which mediate the ubiquitination of target proteins. The functional specificity of the SCF complex depends on the F-box protein as substrate recognition component. SCF(pop1-pop2) is required for the maintenance of ploidy and directs ubiquitination of cig2. The chain is Cullin-1 (cul1) from Schizosaccharomyces pombe (strain 972 / ATCC 24843) (Fission yeast).